A 498-amino-acid chain; its full sequence is Hexokinase-1 (498 aa).

The chain crosses the membrane as a helical span at residues 4–24; that stretch reads AAVGAAVVCTAAVCAAAAVLV. The Hexokinase domain maps to 35-487; the sequence is GRVMAILKEL…SGIGAALLAA (453 aa). The interval 90-228 is hexokinase small subdomain; sequence TGDEHGLFYA…GVDMRVTALV (139 aa). The ADP site is built by glycine 104, threonine 105, and asparagine 106. D-glucose contacts are provided by threonine 194, lysine 195, asparagine 229, and aspartate 230. Residues 229–476 are hexokinase large subdomain; the sequence is NDTVGTLAGG…ETIVIEHSND (248 aa). ADP is bound at residue threonine 253. 3 residues coordinate D-glucose: asparagine 256, glutamate 284, and glutamate 315. Glycine 441 lines the ADP pocket.

Belongs to the hexokinase family.

It localises to the plastid. Its subcellular location is the chloroplast outer membrane. The catalysed reaction is a D-hexose + ATP = a D-hexose 6-phosphate + ADP + H(+). It catalyses the reaction D-fructose + ATP = D-fructose 6-phosphate + ADP + H(+). It carries out the reaction D-glucose + ATP = D-glucose 6-phosphate + ADP + H(+). It participates in carbohydrate metabolism; hexose metabolism. Its pathway is carbohydrate degradation; glycolysis; D-glyceraldehyde 3-phosphate and glycerone phosphate from D-glucose: step 1/4. Functionally, fructose and glucose phosphorylating enzyme. This Spinacia oleracea (Spinach) protein is Hexokinase-1 (HXK1).